Here is a 139-residue protein sequence, read N- to C-terminus: 10 kDa chaperonin 2, chloroplastic (139 aa).

A chloroplast-targeting transit peptide spans 1–39 (MASTFVCSLPNPFFAFPVKATTPSTANHTLLGSRRGCLR). Positions 51–138 (KVVPQADRVL…CKESDLLALV (88 aa)) are cpn-10 domain.

The protein belongs to the GroES chaperonin family. Expressed in leaves and stems. Expressed at low levels in germinating seeds, seedlings, rosettes leaves, flowers and siliques.

The protein resides in the plastid. It localises to the chloroplast stroma. Its function is as follows. Functions as a co-chaperone for protein folding in chloroplasts. This chain is 10 kDa chaperonin 2, chloroplastic, found in Arabidopsis thaliana (Mouse-ear cress).